Here is a 435-residue protein sequence, read N- to C-terminus: Xylose isomerase (435 aa).

Catalysis depends on residues histidine 99 and aspartate 102. Residues glutamate 230, glutamate 266, histidine 269, aspartate 294, aspartate 305, aspartate 307, and aspartate 337 each contribute to the Mg(2+) site.

This sequence belongs to the xylose isomerase family. In terms of assembly, homotetramer. Requires Mg(2+) as cofactor.

The protein resides in the cytoplasm. The catalysed reaction is alpha-D-xylose = alpha-D-xylulofuranose. This is Xylose isomerase from Enterococcus faecalis (strain ATCC 700802 / V583).